A 249-amino-acid chain; its full sequence is Small ribosomal subunit protein eS6 (249 aa).

Residues Arg216–Ala229 show a composition bias toward basic and acidic residues. Residues Arg216–Lys249 are disordered. Phosphoserine occurs at positions 235, 236, 240, 244, and 247. Over residues Ser236–Lys249 the composition is skewed to low complexity.

The protein belongs to the eukaryotic ribosomal protein eS6 family. In terms of assembly, component of the small ribosomal subunit. Post-translationally, ribosomal protein S6 is the major substrate of protein kinases in eukaryote ribosomes. The phosphorylation is stimulated by growth factors, tumor promoting agents, and mitogens. It is dephosphorylated at growth arrest.

It localises to the cytoplasm. Component of the 40S small ribosomal subunit. Plays an important role in controlling cell growth and proliferation through the selective translation of particular classes of mRNA. The chain is Small ribosomal subunit protein eS6 (rps6) from Oncorhynchus mykiss (Rainbow trout).